Consider the following 692-residue polypeptide: UvrABC system protein B (692 aa).

One can recognise a Helicase ATP-binding domain in the interval 32–187; sequence ENIENGEKAQ…LLNDLVGIQF (156 aa). 45–52 is a binding site for ATP; that stretch reads GATGTGKT. A Beta-hairpin motif is present at residues 98 to 121; that stretch reads YYDYYQPEAYVPSSDTYIEKDSSV. Positions 436 to 631 constitute a Helicase C-terminal domain; that stretch reads QIDDLVGEIH…TIKKEIRDLI (196 aa). The UVR domain maps to 656–691; it reads KALVKKLEKEMQQAAAALDFEGAAQLRDMVLELRAM.

Belongs to the UvrB family. Forms a heterotetramer with UvrA during the search for lesions. Interacts with UvrC in an incision complex.

The protein resides in the cytoplasm. In terms of biological role, the UvrABC repair system catalyzes the recognition and processing of DNA lesions. A damage recognition complex composed of 2 UvrA and 2 UvrB subunits scans DNA for abnormalities. Upon binding of the UvrA(2)B(2) complex to a putative damaged site, the DNA wraps around one UvrB monomer. DNA wrap is dependent on ATP binding by UvrB and probably causes local melting of the DNA helix, facilitating insertion of UvrB beta-hairpin between the DNA strands. Then UvrB probes one DNA strand for the presence of a lesion. If a lesion is found the UvrA subunits dissociate and the UvrB-DNA preincision complex is formed. This complex is subsequently bound by UvrC and the second UvrB is released. If no lesion is found, the DNA wraps around the other UvrB subunit that will check the other stand for damage. This is UvrABC system protein B from Lactococcus lactis subsp. cremoris (strain SK11).